An 87-amino-acid chain; its full sequence is Small ribosomal subunit protein bS21 (87 aa).

Residues Y47–R63 are compositionally biased toward basic and acidic residues. Positions Y47–R87 are disordered. Residues R64–A73 show a composition bias toward basic residues.

It belongs to the bacterial ribosomal protein bS21 family.

This Caulobacter vibrioides (strain ATCC 19089 / CIP 103742 / CB 15) (Caulobacter crescentus) protein is Small ribosomal subunit protein bS21.